Consider the following 400-residue polypeptide: Forkhead box protein Q1 (400 aa).

A disordered region spans residues 1 to 112 (MKLEVFVPRA…EGARSKPYTR (112 aa)). Over residues 32-54 (LSAAGDDSLGSDGDCAANSPAAG) the composition is skewed to low complexity. 2 stretches are compositionally biased toward gly residues: residues 55–66 (SGAGDLEGGGGE) and 95–104 (CAGGVGGGEG). The segment at residues 115-210 (KPPYSYIALI…ADGVFRRRRK (96 aa)) is a DNA-binding region (fork-head). Residues 213 to 264 (SHRTTVSASGLRPEEAPPGPAGTPQPAPAARSSPIARSPARQEERSSPASKF) are disordered. A compositionally biased stretch (pro residues) spans 228-239 (APPGPAGTPQPA). Positions 240–251 (PAARSSPIARSP) are enriched in low complexity.

In terms of tissue distribution, expressed in kidney and stomach. Expression in the outer medulla of the kidney and the transitional epithelium. Expressed in the hair follicle medulla.

Its subcellular location is the nucleus. Functionally, plays a role in hair follicle differentiation. This chain is Forkhead box protein Q1 (Foxq1), found in Mus musculus (Mouse).